Here is a 441-residue protein sequence, read N- to C-terminus: Acetyltransferase TRI7 (441 aa).

7 helical membrane passes run 14–34, 75–95, 158–178, 306–326, 336–356, 377–397, and 421–441; these read GILY…LIII, SLTL…LVLT, IWFI…LDII, IAFV…FCWG, LAFF…QALC, LVGY…YLYH, and TATM…GIEV.

This sequence belongs to the wax synthase family.

The protein localises to the membrane. The protein operates within sesquiterpene biosynthesis; trichothecene biosynthesis. Its function is as follows. Acetyltransferase; part of the core gene cluster that mediates the biosynthesis of trichothecenes, a very large family of chemically related bicyclic sesquiterpene compounds acting as mycotoxins, including T2-toxin. The biosynthesis of trichothecenes begins with the cyclization of farnesyl diphosphate to trichodiene and is catalyzed by the trichodiene synthase TRI5. Trichodiene undergoes a series of oxygenations catalyzed by the cytochrome P450 monooxygenase TRI4. TRI4 controls the addition of four oxygens at C-2, C-3, C-11, and the C-12, C-13-epoxide to form the intermediate isotrichotriol. Isotrichotriol then undergoes a non-enzymatic isomerization and cyclization to form isotrichodermol. During this process, the oxygen at the C-2 position becomes the pyran ring oxygen and the hydroxyl group at C-11 is lost. More complex type A trichothecenes are built by modifying isotrichodermol through a series of paired hydroxylation and acetylation or acylation steps. Isotrichodermol is converted to isotrichodermin by the acetyltransferase TRI101. TRI101 encodes a C-3 transacetylase that acts as a self-protection or resistance factor during biosynthesis and that the presence of a free C-3 hydroxyl group is a key component of Fusarium trichothecene phytotoxicity. A second hydroxyl group is added to C-15 by the trichothecene C-15 hydroxylase TRI11, producing 15-decalonectrin, which is then acetylated by TRI3, producing calonectrin. A third hydroxyl group is added at C-4 by the cytochrome P450 monooxygenase TRI13, converting calonectrin to 3,15-diacetoxyspirpenol, which is subsequently acetylated by the acetyltransferase TRI7. A fourth hydroxyl group is added to C-8 by the cytochrome P450 monooxygenase TRI1, followed by the addition of an isovaleryl moiety by TRI16. Finally, the acetyl group is removed from the C-3 position by the trichothecene C-3 esterase TRI8 to produce T-2 toxin. This is Acetyltransferase TRI7 from Fusarium sporotrichioides.